The sequence spans 334 residues: UPF0104 membrane protein MTH_378 (334 aa).

Helical transmembrane passes span 7-27, 33-53, 120-140, 142-162, 218-238, 247-267, 277-297, and 300-320; these read FYFF…MGPS, VYMA…GVLA, FFDL…VPVI, VIAL…YLVN, VIFI…YLVF, FSAV…SALP, MAGL…IALV, and IISF…YAGE.

The protein belongs to the UPF0104 family.

The protein localises to the cell membrane. The protein is UPF0104 membrane protein MTH_378 of Methanothermobacter thermautotrophicus (strain ATCC 29096 / DSM 1053 / JCM 10044 / NBRC 100330 / Delta H) (Methanobacterium thermoautotrophicum).